A 305-amino-acid chain; its full sequence is UDP-3-O-acyl-N-acetylglucosamine deacetylase (305 aa).

Zn(2+) is bound by residues histidine 78, histidine 237, and aspartate 241. Histidine 264 (proton donor) is an active-site residue.

The protein belongs to the LpxC family. The cofactor is Zn(2+).

It catalyses the reaction a UDP-3-O-[(3R)-3-hydroxyacyl]-N-acetyl-alpha-D-glucosamine + H2O = a UDP-3-O-[(3R)-3-hydroxyacyl]-alpha-D-glucosamine + acetate. It functions in the pathway glycolipid biosynthesis; lipid IV(A) biosynthesis; lipid IV(A) from (3R)-3-hydroxytetradecanoyl-[acyl-carrier-protein] and UDP-N-acetyl-alpha-D-glucosamine: step 2/6. In terms of biological role, catalyzes the hydrolysis of UDP-3-O-myristoyl-N-acetylglucosamine to form UDP-3-O-myristoylglucosamine and acetate, the committed step in lipid A biosynthesis. The sequence is that of UDP-3-O-acyl-N-acetylglucosamine deacetylase from Burkholderia cenocepacia (strain HI2424).